The chain runs to 208 residues: Large ribosomal subunit protein uL3 (208 aa).

A disordered region spans residues 126–150 (NQSRGPMAHGSRYHRRPGSMGPVAP).

Belongs to the universal ribosomal protein uL3 family. Part of the 50S ribosomal subunit. Forms a cluster with proteins L14 and L19.

In terms of biological role, one of the primary rRNA binding proteins, it binds directly near the 3'-end of the 23S rRNA, where it nucleates assembly of the 50S subunit. The chain is Large ribosomal subunit protein uL3 from Exiguobacterium sibiricum (strain DSM 17290 / CCUG 55495 / CIP 109462 / JCM 13490 / 255-15).